The primary structure comprises 313 residues: Dimethyladenosine transferase (313 aa).

A disordered region spans residues 1 to 21 (MPKVKSGAIGRRRGRQEQRRE). 6 residues coordinate S-adenosyl-L-methionine: His-37, Leu-39, Gly-64, Glu-85, Asp-113, and Asn-128.

It belongs to the class I-like SAM-binding methyltransferase superfamily. rRNA adenine N(6)-methyltransferase family. Part of the small subunit (SSU) processome, composed of more than 70 proteins and the RNA chaperone small nucleolar RNA (snoRNA) U3.

It is found in the nucleus. The protein localises to the nucleoplasm. It localises to the nucleolus. It catalyses the reaction adenosine(1779)/adenosine(1780) in 18S rRNA + 4 S-adenosyl-L-methionine = N(6)-dimethyladenosine(1779)/N(6)-dimethyladenosine(1780) in 18S rRNA + 4 S-adenosyl-L-homocysteine + 4 H(+). Specifically dimethylates two adjacent adenosines in the loop of a conserved hairpin near the 3'-end of 18S rRNA in the 40S particle. Involved in the pre-rRNA processing steps leading to small-subunit rRNA production independently of its RNA-modifying catalytic activity. Part of the small subunit (SSU) processome, first precursor of the small eukaryotic ribosomal subunit. During the assembly of the SSU processome in the nucleolus, many ribosome biogenesis factors, an RNA chaperone and ribosomal proteins associate with the nascent pre-rRNA and work in concert to generate RNA folding, modifications, rearrangements and cleavage as well as targeted degradation of pre-ribosomal RNA by the RNA exosome. The sequence is that of Dimethyladenosine transferase from Homo sapiens (Human).